A 176-amino-acid chain; its full sequence is MTRGPVDVLIRLLDPDVPIPSYGHPGDAGADLVTTEAAELAPGERAVLPTGVSIALPDGYAAFVHPRSGLAARCGVALVNAPGTVDAGYRGEIKVIVVNLDPRESVRFERFDRIAQLVVQQVEKVRFHEVAELPGSARAEGGFGSTGGHASVDGAEGGITHGGNSYASVVSDREGQ.

Substrate contacts are provided by residues 67–69 (RSG), Asn-80, 84–86 (TVD), and Lys-94. The interval 141–176 (GGFGSTGGHASVDGAEGGITHGGNSYASVVSDREGQ) is disordered.

Belongs to the dUTPase family. Mg(2+) is required as a cofactor.

The catalysed reaction is dUTP + H2O = dUMP + diphosphate + H(+). It participates in pyrimidine metabolism; dUMP biosynthesis; dUMP from dCTP (dUTP route): step 2/2. Functionally, this enzyme is involved in nucleotide metabolism: it produces dUMP, the immediate precursor of thymidine nucleotides and it decreases the intracellular concentration of dUTP so that uracil cannot be incorporated into DNA. The sequence is that of Deoxyuridine 5'-triphosphate nucleotidohydrolase from Streptomyces griseus subsp. griseus (strain JCM 4626 / CBS 651.72 / NBRC 13350 / KCC S-0626 / ISP 5235).